An 84-amino-acid polypeptide reads, in one-letter code: Cell division topological specificity factor (84 aa).

Belongs to the MinE family.

In terms of biological role, prevents the cell division inhibition by proteins MinC and MinD at internal division sites while permitting inhibition at polar sites. This ensures cell division at the proper site by restricting the formation of a division septum at the midpoint of the long axis of the cell. This Ralstonia nicotianae (strain ATCC BAA-1114 / GMI1000) (Ralstonia solanacearum) protein is Cell division topological specificity factor.